Consider the following 311-residue polypeptide: Aspartate carbamoyltransferase catalytic subunit (311 aa).

Carbamoyl phosphate-binding residues include Arg55 and Thr56. Lys85 contacts L-aspartate. Residues Arg106, His135, and Gln138 each contribute to the carbamoyl phosphate site. 2 residues coordinate L-aspartate: Arg168 and Arg230. Carbamoyl phosphate is bound by residues Leu268 and Pro269.

This sequence belongs to the aspartate/ornithine carbamoyltransferase superfamily. ATCase family. As to quaternary structure, heterododecamer (2C3:3R2) of six catalytic PyrB chains organized as two trimers (C3), and six regulatory PyrI chains organized as three dimers (R2).

It catalyses the reaction carbamoyl phosphate + L-aspartate = N-carbamoyl-L-aspartate + phosphate + H(+). Its pathway is pyrimidine metabolism; UMP biosynthesis via de novo pathway; (S)-dihydroorotate from bicarbonate: step 2/3. Its function is as follows. Catalyzes the condensation of carbamoyl phosphate and aspartate to form carbamoyl aspartate and inorganic phosphate, the committed step in the de novo pyrimidine nucleotide biosynthesis pathway. This Serratia proteamaculans (strain 568) protein is Aspartate carbamoyltransferase catalytic subunit.